The primary structure comprises 536 residues: Zinc finger CCCH domain-containing protein 18 (536 aa).

The C3H1-type zinc-finger motif lies at 156–183 (EFPVKICHYFNKGFCKHGNNCRYFHGQI). In terms of domain architecture, HTH OST-type spans 211–294 (SLEKLEGEII…HGQHSVILAE (84 aa)). Residues 317–392 (RQIYLTFPAE…ARVLVKPYRE (76 aa)) enclose the RRM domain.

Functionally, possesses ribonuclease activity in vitro. In Arabidopsis thaliana (Mouse-ear cress), this protein is Zinc finger CCCH domain-containing protein 18.